The chain runs to 947 residues: ATP-dependent RNA helicase DDX42 (947 aa).

Residues 1–18 (MNWNKGGSGNKRGFGFGG) show a composition bias toward gly residues. Disordered regions lie at residues 1–54 (MNWN…NQLP), 68–114 (EENS…PLEA), and 176–200 (NLEYDSDGNPIAPTTKRIIDPLPPI). Over residues 34–54 (VSHSAFQSASSKYGSTSNQLP) the composition is skewed to polar residues. Residues 68 to 81 (EENSYFDDEEEDSS) are compositionally biased toward acidic residues. Positions 112–152 (LEAFMAEVEDQAAKDMRKLEERDKEKANARGIRDDIEEEDD) form a coiled coil. The Q motif motif lies at 250–278 (SSFAHFGFDEQLLHQIRKSEYTQPTPIQC). Positions 281–456 (IPVALSGRDM…RDILVDPIRV (176 aa)) constitute a Helicase ATP-binding domain. 294–301 (AKTGSGKT) lines the ATP pocket. The short motif at 404-407 (DEAD) is the DEAD box element. The Helicase C-terminal domain maps to 484–629 (WLTRRLVEFT…YVSKELLDLA (146 aa)). 2 disordered regions span residues 731 to 754 (SAGSLSSVPSAHPPSGKLPAEAAP) and 797 to 947 (GASA…RWDS). The segment covering 805–929 (GGRERHSDSK…RKEGTREAKT (125 aa)) has biased composition (basic and acidic residues). The span at 938-947 (PKRKKSRWDS) shows a compositional bias: basic residues.

Belongs to the DEAD box helicase family. DDX42 subfamily. As to quaternary structure, transient component of the SF3B subcomplex of the 17S U2 SnRNP complex.

The protein resides in the cytoplasm. Its subcellular location is the nucleus. The catalysed reaction is ATP + H2O = ADP + phosphate + H(+). ATP-dependent RNA helicase that binds to partially double-stranded RNAs (dsRNAs) in order to unwind RNA secondary structures. Unwinding is promoted in the presence of single-strand binding proteins. Also mediates RNA duplex formation thereby displacing the single-strand RNA binding protein. ATP and ADP modulate its activity: ATP binding and hydrolysis by DDX42 triggers RNA strand separation, whereas the ADP-bound form of the protein triggers annealing of complementary RNA strands. Required for assembly of the 17S U2 SnRNP complex of the spliceosome, a large ribonucleoprotein complex that removes introns from transcribed pre-mRNAs: DDX42 associates transiently with the SF3B subcomplex of the 17S U2 SnRNP complex and is released after fulfilling its role in the assembly of 17S U2 SnRNP. This chain is ATP-dependent RNA helicase DDX42 (ddx42), found in Xenopus laevis (African clawed frog).